We begin with the raw amino-acid sequence, 436 residues long: ATP-dependent protease ATPase subunit HslU (436 aa).

ATP is bound by residues Ile-19, 61–65 (GVGKT), Asp-249, Glu-314, and Arg-386.

The protein belongs to the ClpX chaperone family. HslU subfamily. In terms of assembly, a double ring-shaped homohexamer of HslV is capped on each side by a ring-shaped HslU homohexamer. The assembly of the HslU/HslV complex is dependent on binding of ATP.

Its subcellular location is the cytoplasm. Its function is as follows. ATPase subunit of a proteasome-like degradation complex; this subunit has chaperone activity. The binding of ATP and its subsequent hydrolysis by HslU are essential for unfolding of protein substrates subsequently hydrolyzed by HslV. HslU recognizes the N-terminal part of its protein substrates and unfolds these before they are guided to HslV for hydrolysis. The chain is ATP-dependent protease ATPase subunit HslU from Bartonella henselae (strain ATCC 49882 / DSM 28221 / CCUG 30454 / Houston 1) (Rochalimaea henselae).